Here is a 133-residue protein sequence, read N- to C-terminus: Classical arabinogalactan protein 5 (133 aa).

The signal sequence occupies residues 1 to 21; it reads MASKSVVVFLFLALVASSVVA. Q22 carries the pyrrolidone carboxylic acid modification. The tract at residues 23–110 is disordered; the sequence is APGPAPTISP…QSPLSGSPNA (88 aa). Residues 25–37 show a composition bias toward pro residues; it reads GPAPTISPLPATP. A compositionally biased stretch (low complexity) spans 38 to 48; that stretch reads TPSQSPRATAP. Over residues 49–81 the composition is skewed to pro residues; it reads APSPSANPPPSAPTTAPPVSQPPTESPPAPPTS. N109 is lipidated: GPI-anchor amidated asparagine. Residues 110–133 constitute a propeptide, removed in mature form; sequence AAAVSRVSLVGTFAGVAVIAALLL.

It belongs to the classical AGP family. Post-translationally, O-glycosylated on the hydroxyproline residues. As to expression, expressed at a low level in flowers and siliques.

Its subcellular location is the cell membrane. Proteoglycan that seems to be implicated in diverse developmental roles such as differentiation, cell-cell recognition, embryogenesis and programmed cell death. The polypeptide is Classical arabinogalactan protein 5 (AGP5) (Arabidopsis thaliana (Mouse-ear cress)).